The primary structure comprises 209 residues: MADFYYLPGSSPCRSVIMTAKAVGVELNKKLLNLQAGEHLKPEFLKINPQHTIPTLVDNGFALWESRAIQVYLVEKYGKTDSLYPKCPKKRAVINQRLYFDMGTLYQSFANYYYPQVFAKAPADPEAFKKIEAAFEFLNTFLEGQDYAAGDSLTVADIALVASVSTFEVAGFEISKYANVNKWYENAKKVTPGWEENWAGCLEFKKYFE.

The GST N-terminal domain occupies 1–81 (MADFYYLPGS…YLVEKYGKTD (81 aa)). Glutathione-binding positions include 51-53 (HTI) and 65-67 (ESR). The region spanning 87 to 209 (CPKKRAVINQ…GCLEFKKYFE (123 aa)) is the GST C-terminal domain.

Belongs to the GST superfamily. Theta family. Homodimer.

It carries out the reaction RX + glutathione = an S-substituted glutathione + a halide anion + H(+). Functionally, conjugation of reduced glutathione to a wide number of exogenous and endogenous hydrophobic electrophiles. This chain is Glutathione S-transferase 1-1 (GstD1), found in Drosophila yakuba (Fruit fly).